The primary structure comprises 134 residues: Profilin-4 (134 aa).

Cys-13 and Cys-118 are disulfide-bonded. The short motif at 84–100 (AVIRGKKGSGGITIKKT) is the Involved in PIP2 interaction element. The residue at position 114 (Thr-114) is a Phosphothreonine.

This sequence belongs to the profilin family. As to quaternary structure, occurs in many kinds of cells as a complex with monomeric actin in a 1:1 ratio. Phosphorylated by MAP kinases.

Its subcellular location is the cytoplasm. It localises to the cytoskeleton. Its function is as follows. Binds to actin and affects the structure of the cytoskeleton. At high concentrations, profilin prevents the polymerization of actin, whereas it enhances it at low concentrations. This is Profilin-4 from Olea europaea (Common olive).